A 204-amino-acid chain; its full sequence is UPF0637 protein USA300HOU_1046.1 (204 aa).

It belongs to the UPF0637 family.

The sequence is that of UPF0637 protein USA300HOU_1046.1 from Staphylococcus aureus (strain USA300 / TCH1516).